A 420-amino-acid polypeptide reads, in one-letter code: Carbohydrate sulfotransferase 12 (420 aa).

Residues 1–5 (MAKSR) are Cytoplasmic-facing. A helical; Signal-anchor for type II membrane protein membrane pass occupies residues 6-26 (LFCLLVALGSVFMILFIIVYW). The Lumenal segment spans residues 27–420 (DNVGTANLNL…YPKPDDLLSV (394 aa)). N-linked (GlcNAc...) asparagine glycosylation is found at asparagine 76 and asparagine 139. A 3'-phosphoadenylyl sulfate-binding site is contributed by 176 to 182 (PKVACTN). The N-linked (GlcNAc...) asparagine glycan is linked to asparagine 215. 251–259 (RDPFVRLIS) is a binding site for 3'-phosphoadenylyl sulfate. 2 N-linked (GlcNAc...) asparagine glycosylation sites follow: asparagine 286 and asparagine 376.

This sequence belongs to the sulfotransferase 2 family.

It localises to the golgi apparatus membrane. It carries out the reaction chondroitin beta-D-glucuronate + n 3'-phosphoadenylyl sulfate = chondroitin 4'-sulfate + n adenosine 3',5'-bisphosphate + n H(+). Functionally, catalyzes the transfer of sulfate to position 4 of the N-acetylgalactosamine (GalNAc) residue of chondroitin and desulfated dermatan sulfate. Chondroitin sulfate constitutes the predominant proteoglycan present in cartilage and is distributed on the surfaces of many cells and extracellular matrices. The polypeptide is Carbohydrate sulfotransferase 12 (chst12) (Xenopus laevis (African clawed frog)).